A 33-amino-acid chain; its full sequence is Mu-theraphotoxin-Tp1a (33 aa).

3 disulfide bridges follow: cysteine 2/cysteine 17, cysteine 9/cysteine 22, and cysteine 16/cysteine 29. At isoleucine 33 the chain carries Isoleucine amide.

The protein belongs to the neurotoxin 10 (Hwtx-1) family. 55 (ProTx-III) subfamily. As to expression, expressed by the venom gland.

The protein resides in the secreted. In terms of biological role, inhibits voltage-gated sodium channels without significantly altering the voltage dependence of activation or inactivation. Preferentially inhibits human Nav1.7/SCN9A (IC(50)=2.1 nM) &gt; human Nav1.6/SCN8A &gt; human Nav1.2/SCN2A &gt; human Nav1.1/SCN1A &gt; human Nav1.3/SCN3A channels. Exhibits analgesic properties by reversing spontaneous pain induced in mice by intraplantar injection with OD1 (AC P84646), a scorpion toxin that potentiates human Nav1.7/SCN9A. The protein is Mu-theraphotoxin-Tp1a of Thrixopelma pruriens (Peruvian green velvet tarantula).